A 1191-amino-acid chain; its full sequence is Rho GTPase-activating protein 20 (1191 aa).

Polar residues predominate over residues 1–23 (MEAMSPQQETLGGQPGRSSSLTG). The tract at residues 1–45 (MEAMSPQQETLGGQPGRSSSLTGVSRLAGGSCTKKKMKTLAERRR) is disordered. Ser46 carries the phosphoserine modification. The PH domain occupies 78–180 (SLVCSNRTLL…EQKDKWLSLL (103 aa)). Positions 194 to 295 (KSIPLKIFAK…TPFNLQEPFL (102 aa)) constitute a Ras-associating domain. Residues 365–551 (ISLPNICEND…FLIENCLRIF (187 aa)) enclose the Rho-GAP domain. 2 positions are modified to phosphoserine: Ser704 and Ser730. Disordered stretches follow at residues 768 to 791 (SKKN…NHVK), 926 to 1014 (RLNL…SRPA), 1052 to 1123 (KKAK…RHCS), and 1140 to 1191 (HEEI…TKDI). The segment covering 934 to 961 (SYSSLSSPGTSPSGSSVSSQDSAFSQIS) has biased composition (low complexity). Composition is skewed to polar residues over residues 962–981 (EHSV…TFQA) and 1103–1116 (PVQS…SPFQ). The segment covering 1182–1191 (IEDRYLTKDI) has biased composition (basic and acidic residues).

Expressed predominantly in the brain. Lower expression is found in lymph nodes.

Its function is as follows. GTPase activator for the Rho-type GTPases by converting them to an inactive GDP-bound state. This Homo sapiens (Human) protein is Rho GTPase-activating protein 20 (ARHGAP20).